The chain runs to 190 residues: Cytoglobin (190 aa).

The Globin domain maps to 18–167; sequence ELSEAERKAV…IYSHVTAAYK (150 aa). A disulfide bridge links cysteine 38 with cysteine 83. 2 residues coordinate heme b: histidine 81 and histidine 113.

This sequence belongs to the globin family. Monomeric. Homodimer; disulfide-linked in vitro. Also homooligomeric in vitro. In terms of processing, the formation of an intramolecular disulfide bond between cysteines Cys-38 and Cys-83 specifically enhances the nitrite reductase activity. In terms of tissue distribution, widely expressed. Highest expression in heart, stomach, bladder and small intestine.

The protein localises to the cytoplasm. It is found in the nucleus. The enzyme catalyses Fe(II)-heme b-[protein] + nitric oxide + O2 = Fe(III)-heme b-[protein] + nitrate. It carries out the reaction Fe(III)-heme b-[protein] + nitric oxide + H2O = Fe(II)-heme b-[protein] + nitrite + 2 H(+). It catalyses the reaction 2 superoxide + 2 H(+) = H2O2 + O2. The catalysed reaction is H2O2 + AH2 = A + 2 H2O. Its activity is regulated as follows. The nitric oxide dioxygenase activity is activated by a reducing system composed of cytochrome b5, its upstream reductase CYB5R3 and NADH. In terms of biological role, probable multifunctional globin with a hexacoordinated heme iron required for the catalysis of various reactions depending on redox condition of the cell as well as oxygen availability. Has a nitric oxide dioxygenase (NOD) activity and is most probably involved in cell-mediated and oxygen-dependent nitric oxide consumption. By scavenging this second messenger may regulate several biological processes including endothelium-mediated vasodilation and vascular tone. Under normoxic conditions functions as a nitric oxide dioxygenase (NOD) but under hypoxic conditions the globin may switch its function to that of a nitrite (NO2) reductase (NiR), generating nitric oxide. Could also have peroxidase and superoxide dismutase activities, detoxifying reactive oxygen species and protecting cells against oxidative stress. Also binds dioxygen with low affinity and could function as an oxygen sensor but has probably no function as a respiratory oxygen carrier. The polypeptide is Cytoglobin (Homo sapiens (Human)).